Reading from the N-terminus, the 402-residue chain is MSFEGGHGGSRCRGAESGDAEPPPQPPPPPPPTPPPGEPAPVPAAPRYLPPLPASPETPERAAGPSEPLGEVAPRCRGADELPPPPLPLQPAGQEVAAAGDSGEGPRRLPEAAAAKGGPGESEAGAGGERERRGAGDQPETRSVCSSRSSSSGGGDQRAGHQHQHHQPICKICFQGAEQGELLNPCRCDGSVRYTHQLCLLKWISERGSWTCELCCYRYHVIAIKMKQPCQWQSISITLVEKVQMIAVILGSLFLIASVTWLLWSAFSPYAVWQRKDILFQICYGMYGFMDLVCIGLIVHEGAAVYRVFKRWRAVNLHWDVLNYDKATDIEESSRGESSTSRTLWLPLTALRNRNLVHPTQLTSPRFQCGYVLLHLFNRMRPHEDLSEDNSSGEVVMRVTSV.

Positions 1 to 11 are enriched in gly residues; it reads MSFEGGHGGSR. The tract at residues 1 to 161 is disordered; sequence MSFEGGHGGS…SGGGDQRAGH (161 aa). Pro residues predominate over residues 21-56; it reads EPPPQPPPPPPPTPPPGEPAPVPAAPRYLPPLPASP. Positions 111–124 are enriched in low complexity; sequence EAAAAKGGPGESEA. The RING-CH-type zinc finger occupies 162–222; it reads QHQHHQPICK…ELCCYRYHVI (61 aa). Residues cysteine 170, cysteine 173, cysteine 186, cysteine 188, histidine 196, cysteine 199, cysteine 212, and cysteine 215 each contribute to the Zn(2+) site. A run of 2 helical transmembrane segments spans residues 245–265 and 278–298; these read MIAVILGSLFLIASVTWLLWS and ILFQICYGMYGFMDLVCIGLI. The short motif at 371-374 is the YXXL motif element; that stretch reads YVLL. The PDZ-binding signature appears at 399 to 402; sequence VTSV.

As to quaternary structure, interacts (YXXL motif) with AP1M1. Interacts (via PDZ-binding motif) with LIN7A. Interacts with unidentified fucose glycoproteins.

Its subcellular location is the cytoplasmic vesicle membrane. It carries out the reaction S-ubiquitinyl-[E2 ubiquitin-conjugating enzyme]-L-cysteine + [acceptor protein]-L-lysine = [E2 ubiquitin-conjugating enzyme]-L-cysteine + N(6)-ubiquitinyl-[acceptor protein]-L-lysine.. The protein operates within protein modification; protein ubiquitination. In terms of biological role, E3 ubiquitin-protein ligase that mediates polyubiquitination of CD4. E3 ubiquitin ligases accept ubiquitin from an E2 ubiquitin-conjugating enzyme in the form of a thioester and then directly transfer the ubiquitin to targeted substrates. May play a role in ubuquitin-dependent protein sorting in developmenting spermatids. This is E3 ubiquitin-protein ligase MARCHF11 from Homo sapiens (Human).